A 507-amino-acid polypeptide reads, in one-letter code: Iroquois-class homeodomain protein IRX-3 (507 aa).

Residues 19-39 (RPGAAGGGGGGSSAGGRSGPG) are disordered. A compositionally biased stretch (gly residues) spans 22–39 (AAGGGGGGSSAGGRSGPG). The segment at residues 130–192 (DPSRPKNATR…NARRRLKKEN (63 aa)) is a DNA-binding region (homeobox; TALE-type). Disordered stretches follow at residues 193-398 (KMTW…AAAA) and 416-468 (RPFP…SGTD). Composition is skewed to acidic residues over residues 213–223 (REEEDEEEDEE) and 230–261 (EMEEEELAGEEEDTGGEGLADDDEDEEIDLEN). Composition is skewed to pro residues over residues 314-342 (APPPPPVARAPASPPSPPSSLDPCAPAPA) and 418-428 (FPGPPAGPRPH). Residues S326 and S329 each carry the phosphoserine modification. Low complexity predominate over residues 436 to 460 (APQHLLGLPGAAGHPAAAAAAYARP).

The protein belongs to the TALE/IRO homeobox family. Expressed by neural progenitor cells in discrete domains of the ventral neural tube. Also expressed in specific and overlapping patterns with Irx1 and Irx2 in the developing and adult metanephric kidney. In the adult metanephros, renal expression is confined to the S3 segment of the proximal tubule, in the loop of Henle.

Its subcellular location is the nucleus. Transcription factor involved in SHH-dependent neural patterning. Together with NKX2-2 and NKX6-1 acts to restrict the generation of motor neurons to the appropriate region of the neural tube. Belongs to the class I proteins of neuronal progenitor factors, which are repressed by SHH signals. Involved in the transcriptional repression of MNX1 in non-motor neuron cells. Acts as a regulator of energy metabolism. The sequence is that of Iroquois-class homeodomain protein IRX-3 (Irx3) from Mus musculus (Mouse).